The chain runs to 1070 residues: MPKREDIKKVLLIGSGPITIGQAAEFDFSGSQACRSLKEEGVQVVLVNSNPATIMTDPEMADSVYIEPLDARIVEKIIEKERPDGIIAGIGGQTGLNITSELAEMGVFEKYGVQILGTPVEAIKNTEDRELFKETMLRIGEKVPQSRAVHTLKEAEEVVEELGLPLIVRPAYTLGGAGGGIARTKEELLEITERGLRRSRISQVLIEESVLGWAEVEYEVMRDANDTCIVICNMENIDPMGVHTGESAVVAPSQTLTDAEHQMLRSASIKIIRALKIEGGCNIQYALKEGDYRIVEVNPRVSRSSALASKATGYPIARVTAKIAIGMALDEIINSVTKNTPASFEPALDYVITKIPRWPFDKFVTADKTLTTAMKSTGEIMAIGRTMEESLLKAFKSLDIDSQLGNKRWDEHEVKTLLKTPTSERLFVIFHALERGMSVKEIAELTSINPFFISKIKKIVEMEKRIRTEELTSELLREVKKLGFPDTRLAELTGKTREQISDLRHDAGILATFKMVDTCAAEFQAATPYYYSTYEDTCETNPTDRKKILILGAGPIRIGQGIEFDYCTVHAVTALREEGIETHIINNNPETVSTDFDTSDKLFFEPLTMEYVMNVIERERPDGVLVQFGGQTSVNLALPLKKELKRRTDLDTMIMGTDPEDMDLAEDREKFYVLMQKFGILQPEGGYATSQHEAIEVAQRIGFPVLVRPSYVLGGRAMEIVYDEIDLERYMKEAVRVSPEHPILIDDFLEGACEIDVDAVCDRKDVLIGAIMEHIEEAGVHSGDSACVIPPQSLSEDVLAQVRDYTRKIALGLRVKGLINIQMAEKGGKVFVLEANPRSSRTIPFVSKAVGLPLAKIAARVIAGHSLKEMGYTDEPKPKHVSIKEVLLPFDKLPGADPVLGPEMKSTGEVMGIDYDFGRAYYKAELAADNLLPLTGKVFLSIRNADKPELVEVARKLQAAGLELMGTRGTVNYLAQHGVFMDTVKKVHDGSPNVIDMMRRDEVDLIINTPTSKQSRRDGSRIRRAAVDFKVPYITTIQAASAAAAAIETMKKGEDLTIKSINEYHKEMGL.

The segment at 1–399 (MPKREDIKKV…SLLKAFKSLD (399 aa)) is carboxyphosphate synthetic domain. Residues Arg129, Arg169, Gly175, Gly176, Glu208, Val210, Glu215, Gly241, Val242, His243, Gln284, and Glu296 each coordinate ATP. The 193-residue stretch at 133 to 325 (KETMLRIGEK…IARVTAKIAI (193 aa)) folds into the ATP-grasp 1 domain. Mg(2+)-binding residues include Gln284, Glu296, and Asn298. Positions 284, 296, and 298 each coordinate Mn(2+). Residues 400–540 (IDSQLGNKRW…YSTYEDTCET (141 aa)) form an oligomerization domain region. A carbamoyl phosphate synthetic domain region spans residues 541–931 (NPTDRKKILI…YKAELAADNL (391 aa)). An ATP-grasp 2 domain is found at 672-863 (YVLMQKFGIL…LAKIAARVIA (192 aa)). The ATP site is built by Arg708, Asp747, Leu749, Glu754, Gly779, Val780, His781, Ser782, Gln822, and Glu834. Residues Gln822, Glu834, and Asn836 each contribute to the Mg(2+) site. Mn(2+)-binding residues include Gln822, Glu834, and Asn836. Residues 930 to 1070 (NLLPLTGKVF…INEYHKEMGL (141 aa)) form the MGS-like domain. Residues 932–1070 (LPLTGKVFLS…INEYHKEMGL (139 aa)) form an allosteric domain region.

This sequence belongs to the CarB family. As to quaternary structure, composed of two chains; the small (or glutamine) chain promotes the hydrolysis of glutamine to ammonia, which is used by the large (or ammonia) chain to synthesize carbamoyl phosphate. Tetramer of heterodimers (alpha,beta)4. The cofactor is Mg(2+). Mn(2+) serves as cofactor.

The enzyme catalyses hydrogencarbonate + L-glutamine + 2 ATP + H2O = carbamoyl phosphate + L-glutamate + 2 ADP + phosphate + 2 H(+). It catalyses the reaction hydrogencarbonate + NH4(+) + 2 ATP = carbamoyl phosphate + 2 ADP + phosphate + 2 H(+). Its pathway is amino-acid biosynthesis; L-arginine biosynthesis; carbamoyl phosphate from bicarbonate: step 1/1. The protein operates within pyrimidine metabolism; UMP biosynthesis via de novo pathway; (S)-dihydroorotate from bicarbonate: step 1/3. Functionally, large subunit of the glutamine-dependent carbamoyl phosphate synthetase (CPSase). CPSase catalyzes the formation of carbamoyl phosphate from the ammonia moiety of glutamine, carbonate, and phosphate donated by ATP, constituting the first step of 2 biosynthetic pathways, one leading to arginine and/or urea and the other to pyrimidine nucleotides. The large subunit (synthetase) binds the substrates ammonia (free or transferred from glutamine from the small subunit), hydrogencarbonate and ATP and carries out an ATP-coupled ligase reaction, activating hydrogencarbonate by forming carboxy phosphate which reacts with ammonia to form carbamoyl phosphate. This Methanosarcina acetivorans (strain ATCC 35395 / DSM 2834 / JCM 12185 / C2A) protein is Carbamoyl phosphate synthase large chain.